The primary structure comprises 401 residues: Enoyl-[acyl-carrier-protein] reductase [NADH] 1 (401 aa).

Residues 48–53 (GSSSGY), 74–75 (FE), 111–112 (DA), and 139–140 (LA) each bind NAD(+). Residue tyrosine 225 coordinates substrate. The active-site Proton donor is tyrosine 235. Residues lysine 244 and 273–275 (VVT) contribute to the NAD(+) site.

The protein belongs to the TER reductase family. In terms of assembly, monomer.

The catalysed reaction is a 2,3-saturated acyl-[ACP] + NAD(+) = a (2E)-enoyl-[ACP] + NADH + H(+). The enzyme catalyses a 2,3-saturated acyl-CoA + NAD(+) = a (2E)-enoyl-CoA + NADH + H(+). It catalyses the reaction (2E)-butenoyl-[ACP] + NADH + H(+) = butanoyl-[ACP] + NAD(+). It carries out the reaction butanoyl-CoA + NAD(+) = (2E)-butenoyl-CoA + NADH + H(+). It participates in lipid metabolism; fatty acid biosynthesis. Its activity is regulated as follows. Weakly inhibited by triclosan. Functionally, involved in the final reduction of the elongation cycle of fatty acid synthesis (FAS II). Catalyzes the NADH-dependent reduction of a carbon-carbon double bond in an enoyl moiety that is covalently linked to an acyl carrier protein (ACP). It can use both crotonyl-CoA and crotonyl-ACP. This chain is Enoyl-[acyl-carrier-protein] reductase [NADH] 1, found in Vibrio cholerae serotype O1 (strain ATCC 39315 / El Tor Inaba N16961).